Here is a 437-residue protein sequence, read N- to C-terminus: Phosphomethylpyrimidine synthase (437 aa).

Residues N69, M98, Y127, H163, 185–187 (SRG), 226–229 (DACR), and E265 each bind substrate. Position 269 (H269) interacts with Zn(2+). Position 292 (Y292) interacts with substrate. H333 lines the Zn(2+) pocket. Positions 409, 412, and 416 each coordinate [4Fe-4S] cluster.

This sequence belongs to the ThiC family. It depends on [4Fe-4S] cluster as a cofactor.

The catalysed reaction is 5-amino-1-(5-phospho-beta-D-ribosyl)imidazole + S-adenosyl-L-methionine = 4-amino-2-methyl-5-(phosphooxymethyl)pyrimidine + CO + 5'-deoxyadenosine + formate + L-methionine + 3 H(+). It functions in the pathway cofactor biosynthesis; thiamine diphosphate biosynthesis. Functionally, catalyzes the synthesis of the hydroxymethylpyrimidine phosphate (HMP-P) moiety of thiamine from aminoimidazole ribotide (AIR) in a radical S-adenosyl-L-methionine (SAM)-dependent reaction. The sequence is that of Phosphomethylpyrimidine synthase from Clostridium novyi (strain NT).